A 291-amino-acid polypeptide reads, in one-letter code: Protease HtpX homolog (291 aa).

Transmembrane regions (helical) follow at residues 4-24 and 38-58; these read VVLF…SARV and MGML…ISLL. Position 144 (His144) interacts with Zn(2+). Glu145 is an active-site residue. His148 serves as a coordination point for Zn(2+). A run of 2 helical transmembrane segments spans residues 159 to 179 and 199 to 219; these read LIQG…AYAI and ISSI…VMYF. Glu224 is a Zn(2+) binding site.

Belongs to the peptidase M48B family. Requires Zn(2+) as cofactor.

It localises to the cell inner membrane. This Chlorobium phaeobacteroides (strain DSM 266 / SMG 266 / 2430) protein is Protease HtpX homolog.